A 332-amino-acid chain; its full sequence is uncharacterized protein (332 aa).

A disordered region spans residues P159–P256. A compositionally biased stretch (pro residues) spans R201 to R231.

It is found in the virion. This is an uncharacterized protein from Acanthamoeba polyphaga (Amoeba).